The sequence spans 137 residues: MLQPKRTKYRKMHKGRNDGLAWSGNAVSFGEYGLKATAHGQLTARQIEAARRTISRHVKKGGKMWIRVFPDKPITKKPIEVRMGSGKGNVEYWVAQIQPGRMIYEIEGIPEETAREAFRLAAAKLSVTTTFVTRTVR.

It belongs to the universal ribosomal protein uL16 family. In terms of assembly, part of the 50S ribosomal subunit.

In terms of biological role, binds 23S rRNA and is also seen to make contacts with the A and possibly P site tRNAs. In Xanthomonas axonopodis pv. citri (strain 306), this protein is Large ribosomal subunit protein uL16.